The primary structure comprises 373 residues: Putative protein YfkA (373 aa).

The Radical SAM core domain occupies 26–256 (YGDMQLTNVE…DIRDENTWML (231 aa)). [4Fe-4S] cluster contacts are provided by Cys42, Cys46, and Cys49.

This sequence belongs to the radical SAM superfamily. [4Fe-4S] cluster is required as a cofactor.

This Bacillus subtilis (strain 168) protein is Putative protein YfkA (yfkA).